We begin with the raw amino-acid sequence, 368 residues long: 4-hydroxy-3-methylbut-2-en-1-yl diphosphate synthase (flavodoxin) (368 aa).

[4Fe-4S] cluster is bound by residues Cys268, Cys271, Cys303, and Glu310.

Belongs to the IspG family. Requires [4Fe-4S] cluster as cofactor.

The catalysed reaction is (2E)-4-hydroxy-3-methylbut-2-enyl diphosphate + oxidized [flavodoxin] + H2O + 2 H(+) = 2-C-methyl-D-erythritol 2,4-cyclic diphosphate + reduced [flavodoxin]. Its pathway is isoprenoid biosynthesis; isopentenyl diphosphate biosynthesis via DXP pathway; isopentenyl diphosphate from 1-deoxy-D-xylulose 5-phosphate: step 5/6. Functionally, converts 2C-methyl-D-erythritol 2,4-cyclodiphosphate (ME-2,4cPP) into 1-hydroxy-2-methyl-2-(E)-butenyl 4-diphosphate. This is 4-hydroxy-3-methylbut-2-en-1-yl diphosphate synthase (flavodoxin) from Listeria monocytogenes serotype 4b (strain CLIP80459).